Here is a 273-residue protein sequence, read N- to C-terminus: MKKYLLGIGLILALIACKQNVSSLDEKNSASVDLPGEMKVLVSKEKDKDGKYSLKATVDKIELKGTSDKDNGSGVLEGTKDDKSKAKLTIADDLSKTTFELFKEDGKTLVSRKVSSKDKTSTDEMFNEKGELSAKTMTRENGTKLEYTEMKSDGTGKAKEVLKNFTLEGKVANDKVTLEVKEGTVTLSKEIAKSGEVTVALNDTNTTQATKKTGAWDSKTSTLTISVNSKKTTQLVFTKQDTITVQKYDSAGTNLEGTAVEIKTLDELKNALK.

The signal sequence occupies residues 1-16 (MKKYLLGIGLILALIA). The N-palmitoyl cysteine moiety is linked to residue cysteine 17. Cysteine 17 carries the S-diacylglycerol cysteine lipid modification.

This sequence belongs to the OspA lipoprotein family.

It is found in the cell outer membrane. Its subcellular location is the cell surface. This chain is Outer surface protein A, found in Borreliella burgdorferi (Lyme disease spirochete).